The sequence spans 294 residues: ATP synthase gamma chain (294 aa).

The protein belongs to the ATPase gamma chain family. F-type ATPases have 2 components, CF(1) - the catalytic core - and CF(0) - the membrane proton channel. CF(1) has five subunits: alpha(3), beta(3), gamma(1), delta(1), epsilon(1). CF(0) has three main subunits: a, b and c.

The protein resides in the cell inner membrane. Produces ATP from ADP in the presence of a proton gradient across the membrane. The gamma chain is believed to be important in regulating ATPase activity and the flow of protons through the CF(0) complex. In Nitrosomonas eutropha (strain DSM 101675 / C91 / Nm57), this protein is ATP synthase gamma chain.